Here is a 314-residue protein sequence, read N- to C-terminus: Homoserine O-acetyltransferase (314 aa).

The active-site Acyl-thioester intermediate is cysteine 142. 2 residues coordinate substrate: lysine 163 and serine 192. The active-site Proton acceptor is histidine 235. Glutamate 237 is an active-site residue. Arginine 249 contacts substrate.

It belongs to the MetA family.

It localises to the cytoplasm. The enzyme catalyses L-homoserine + acetyl-CoA = O-acetyl-L-homoserine + CoA. The protein operates within amino-acid biosynthesis; L-methionine biosynthesis via de novo pathway; O-acetyl-L-homoserine from L-homoserine: step 1/1. Transfers an acetyl group from acetyl-CoA to L-homoserine, forming acetyl-L-homoserine. The protein is Homoserine O-acetyltransferase of Streptococcus thermophilus (strain ATCC BAA-491 / LMD-9).